We begin with the raw amino-acid sequence, 149 residues long: Small ribosomal subunit protein uS11z (149 aa).

The segment at 130-149 is disordered; it reads VTPVPTDSTRRKGGRRGRRL. The span at 140–149 shows a compositional bias: basic residues; the sequence is RKGGRRGRRL.

Belongs to the universal ribosomal protein uS11 family.

This chain is Small ribosomal subunit protein uS11z, found in Zea mays (Maize).